Reading from the N-terminus, the 282-residue chain is NAD kinase (282 aa).

The Proton acceptor role is filled by D67. NAD(+) contacts are provided by residues 67–68 (DG), 140–141 (NE), H151, R170, D172, and 183–188 (TAYNLS).

It belongs to the NAD kinase family. A divalent metal cation is required as a cofactor.

It localises to the cytoplasm. The catalysed reaction is NAD(+) + ATP = ADP + NADP(+) + H(+). In terms of biological role, involved in the regulation of the intracellular balance of NAD and NADP, and is a key enzyme in the biosynthesis of NADP. Catalyzes specifically the phosphorylation on 2'-hydroxyl of the adenosine moiety of NAD to yield NADP. This chain is NAD kinase, found in Halobacterium salinarum (strain ATCC 700922 / JCM 11081 / NRC-1) (Halobacterium halobium).